Reading from the N-terminus, the 238-residue chain is Type III secretion protein hrcQa (238 aa).

Residues 66-238 (DAEALLSLLG…SHEEHSHHEY (173 aa)) are hrcQa-C.

As to quaternary structure, interacts with hrcQb.

It localises to the cell inner membrane. Component of the type III secretion system, which is required for effector protein delivery, parasitism, and pathogenicity. Probably participates in the formation of a C-ring-like assembly along with hrcQb. This is Type III secretion protein hrcQa (hrcQa) from Pseudomonas syringae pv. syringae.